The primary structure comprises 148 residues: UPF0756 membrane protein YeaL (148 aa).

4 helical membrane passes run 14–34 (ALGF…LIIV), 51–71 (LTVG…SGTL), 86–106 (LVAI…VALM), and 121–141 (VLGV…AGLV).

This sequence belongs to the UPF0756 family.

Its subcellular location is the cell membrane. The protein is UPF0756 membrane protein YeaL of Salmonella arizonae (strain ATCC BAA-731 / CDC346-86 / RSK2980).